Reading from the N-terminus, the 506-residue chain is ATP synthase subunit alpha (506 aa).

Gly-170–Thr-177 contacts ATP.

It belongs to the ATPase alpha/beta chains family. F-type ATPases have 2 components, CF(1) - the catalytic core - and CF(0) - the membrane proton channel. CF(1) has five subunits: alpha(3), beta(3), gamma(1), delta(1), epsilon(1). CF(0) has four main subunits: a(1), b(1), b'(1) and c(9-12).

The protein localises to the cellular thylakoid membrane. It carries out the reaction ATP + H2O + 4 H(+)(in) = ADP + phosphate + 5 H(+)(out). Its function is as follows. Produces ATP from ADP in the presence of a proton gradient across the membrane. The alpha chain is a regulatory subunit. In Synechococcus sp. (strain CC9902), this protein is ATP synthase subunit alpha.